The primary structure comprises 403 residues: Large ribosomal subunit protein uL3 (403 aa).

The segment at 1 to 37 is disordered; sequence MSHRKFSAPRHGSLGFLPRKRSSRHRGKVKSFPKDDP. Ser13 carries the phosphoserine modification. A compositionally biased stretch (basic residues) spans 18 to 31; that stretch reads PRKRSSRHRGKVKS. Lys39 participates in a covalent cross-link: Glycyl lysine isopeptide (Lys-Gly) (interchain with G-Cter in SUMO2). Position 136 is an N6-acetyllysine (Lys136). Residues Lys224 and Lys226 each participate in a glycyl lysine isopeptide (Lys-Gly) (interchain with G-Cter in SUMO2) cross-link. His245 is subject to Tele-methylhistidine. N6-acetyllysine; alternate is present on residues Lys286 and Lys294. Lys286 is covalently cross-linked (Glycyl lysine isopeptide (Lys-Gly) (interchain with G-Cter in SUMO2); alternate). A Glycyl lysine isopeptide (Lys-Gly) (interchain with G-Cter in SUMO1); alternate cross-link involves residue Lys294. At Ser304 the chain carries Phosphoserine. Lys366 is subject to N6-acetyllysine; alternate. Lys366 is covalently cross-linked (Glycyl lysine isopeptide (Lys-Gly) (interchain with G-Cter in SUMO2); alternate). Lys373 carries the post-translational modification N6-acetyllysine. Residues Lys386, Lys393, and Lys399 each participate in a glycyl lysine isopeptide (Lys-Gly) (interchain with G-Cter in SUMO2) cross-link.

The protein belongs to the universal ribosomal protein uL3 family. As to quaternary structure, component of the large ribosomal subunit. Interacts with DHX33. Post-translationally, constitutively monomethylated at His-245 by METTL18. Methylation at His-245 regulates translation elongation by slowing ribosome traversal on tyrosine codons: slower elongation provides enough time for proper folding of synthesized proteins and prevents cellular aggregation of tyrosine-rich proteins It is not required for incorporation of RPL3 into ribosomes.

It is found in the nucleus. Its subcellular location is the nucleolus. It localises to the cytoplasm. Functionally, component of the large ribosomal subunit. The ribosome is a large ribonucleoprotein complex responsible for the synthesis of proteins in the cell. This chain is Large ribosomal subunit protein uL3 (RPL3), found in Macaca fascicularis (Crab-eating macaque).